The chain runs to 670 residues: DNA ligase (670 aa).

NAD(+) is bound by residues aspartate 33–aspartate 37, serine 82–leucine 83, and glutamate 113. Lysine 115 serves as the catalytic N6-AMP-lysine intermediate. 4 residues coordinate NAD(+): arginine 136, glutamate 170, lysine 285, and lysine 309. Cysteine 403, cysteine 406, cysteine 421, and cysteine 427 together coordinate Zn(2+). Residues glutamate 587–glycine 670 form the BRCT domain.

It belongs to the NAD-dependent DNA ligase family. LigA subfamily. Mg(2+) is required as a cofactor. The cofactor is Mn(2+).

The catalysed reaction is NAD(+) + (deoxyribonucleotide)n-3'-hydroxyl + 5'-phospho-(deoxyribonucleotide)m = (deoxyribonucleotide)n+m + AMP + beta-nicotinamide D-nucleotide.. Its function is as follows. DNA ligase that catalyzes the formation of phosphodiester linkages between 5'-phosphoryl and 3'-hydroxyl groups in double-stranded DNA using NAD as a coenzyme and as the energy source for the reaction. It is essential for DNA replication and repair of damaged DNA. The protein is DNA ligase of Halothermothrix orenii (strain H 168 / OCM 544 / DSM 9562).